Here is an 81-residue protein sequence, read N- to C-terminus: Exodeoxyribonuclease 7 small subunit (81 aa).

This sequence belongs to the XseB family. As to quaternary structure, heterooligomer composed of large and small subunits.

It localises to the cytoplasm. The enzyme catalyses Exonucleolytic cleavage in either 5'- to 3'- or 3'- to 5'-direction to yield nucleoside 5'-phosphates.. Bidirectionally degrades single-stranded DNA into large acid-insoluble oligonucleotides, which are then degraded further into small acid-soluble oligonucleotides. The chain is Exodeoxyribonuclease 7 small subunit from Paramagnetospirillum magneticum (strain ATCC 700264 / AMB-1) (Magnetospirillum magneticum).